We begin with the raw amino-acid sequence, 55 residues long: Large ribosomal subunit protein bL33 (55 aa).

Belongs to the bacterial ribosomal protein bL33 family.

The sequence is that of Large ribosomal subunit protein bL33 from Proteus mirabilis (strain HI4320).